Here is a 188-residue protein sequence, read N- to C-terminus: MDNQEKKTNYQNTDKENDLEKNKEKKNDESIFQNKKMNEIREKIFKNKKEINNLKLRHLANIENIKKNTEKKIKKIKNAEIENFFKQIIPIINNLEDILTISTKLNLNDEPSIQGIELTLKSLLSILIKFGVKIEGKKNEIFNPKIHDVILTESSNTIEPNYIISVKKKGFIFKKTILRKAAVVISKT.

A compositionally biased stretch (basic and acidic residues) spans 1–29 (MDNQEKKTNYQNTDKENDLEKNKEKKNDE). Positions 1–33 (MDNQEKKTNYQNTDKENDLEKNKEKKNDESIFQ) are disordered.

The protein belongs to the GrpE family. In terms of assembly, homodimer.

Its subcellular location is the cytoplasm. Its function is as follows. Participates actively in the response to hyperosmotic and heat shock by preventing the aggregation of stress-denatured proteins, in association with DnaK and GrpE. It is the nucleotide exchange factor for DnaK and may function as a thermosensor. Unfolded proteins bind initially to DnaJ; upon interaction with the DnaJ-bound protein, DnaK hydrolyzes its bound ATP, resulting in the formation of a stable complex. GrpE releases ADP from DnaK; ATP binding to DnaK triggers the release of the substrate protein, thus completing the reaction cycle. Several rounds of ATP-dependent interactions between DnaJ, DnaK and GrpE are required for fully efficient folding. This Buchnera aphidicola subsp. Schizaphis graminum (strain Sg) protein is Protein GrpE 2.